The sequence spans 658 residues: MLQGKLRRSSLKAKLLVSFVIVLILPSIVIGWTSYQQAKTNFNETILQSAEDNVKILNNVINKEIDSKKVDAVYFTKLFNGVSYGTDQLQNVQNKLEEYNKLHPEIEAIYTGSSTGQFIQSPSIQMPDGYNPTERDWYKEAAKKSGEVVITAPYKSSTTGNIVITIAKQNEDKSGVLGIDLIINDIVNTSKMVNIGKTGFVAIFDQSKHVIAHPTMKPGDKIEEKVEKELYKQETGDFKFKLDGDDRNITFITNKQTGWKIAGIMPSKEIIEAANPIFYKTLTVIGISLIIGGVLIYFIIASIISPLKQLVISSKKISEGDLTETITVHSKDEIGQLGESFNEMAASLHHVISNINTSASHVAASSEELTASMKQTSEATEQITQAIEQVSSGAEIQTKEVEEGATLLEGVTEGIQRVADSSSLVSTASMYTKKKAEDGGKLVEQTVNQMQLIHESVSQSDKVIVLLDDKSKQIGAILEVIQHIAEQTNLLALNAAIEAARAGEQGRGFAIVADEVRKLAEQSGQSSTEIGKLVKEIQFDIKETVSSMKQVGTEVQSGLVVANETKQSFAEILKSTDDTVVQIDNMVDVAKQMTVDARQVSASINEIAATIEENAASVQNIAGSSEEQLASVDEINAAAVHLSQMAEELQEMIGKFKV.

Topologically, residues 1–14 (MLQGKLRRSSLKAK) are cytoplasmic. A helical transmembrane segment spans residues 15–35 (LLVSFVIVLILPSIVIGWTSY). Residues 36 to 283 (QQAKTNFNET…ANPIFYKTLT (248 aa)) are Extracellular-facing. Residues 44–109 (ETILQSAEDN…NKLHPEIEAI (66 aa)) are a coiled coil. In terms of domain architecture, Cache spans 150–221 (ITAPYKSSTT…AHPTMKPGDK (72 aa)). A helical membrane pass occupies residues 284 to 304 (VIGISLIIGGVLIYFIIASII). The HAMP domain maps to 301-353 (ASIISPLKQLVISSKKISEGDLTETITVHSKDEIGQLGESFNEMAASLHHVIS). Residues 305–658 (SPLKQLVISS…LQEMIGKFKV (354 aa)) lie on the Cytoplasmic side of the membrane. At E368 the chain carries Glutamate methyl ester (Glu). Residues 372-622 (SMKQTSEATE…ENAASVQNIA (251 aa)) form the Methyl-accepting transducer domain. Q592 is subject to Deamidated glutamine. Q592 bears the Glutamate methyl ester (Gln) mark. Glutamate methyl ester (Glu) is present on residues E627 and E634.

It belongs to the methyl-accepting chemotaxis (MCP) protein family.

Its subcellular location is the cell membrane. In terms of biological role, chemotactic-signal transducers respond to changes in the concentration of attractants and repellents in the environment, transduce a signal from the outside to the inside of the cell, and facilitate sensory adaptation through the variation of the level of methylation. The sequence is that of Probable methyl-accepting chemotaxis protein BT9727_0469 from Bacillus thuringiensis subsp. konkukian (strain 97-27).